The primary structure comprises 251 residues: Protein DEEPER ROOTING 1 (251 aa).

Residues 46-52 (SLLAIGT) carry the IGT motif motif. Positions 64 to 105 (VENSSDNVQSVQDTVKFTEEEVDKIRKEFETLLAIKDQAEAQ) form a coiled coil.

Belongs to the LAZY family.

Involved in the control of root growth angle. Involved in cell elongation in the root tip that causes asymmetric root growth and downward bending of the root in response to gravity. This is Protein DEEPER ROOTING 1 from Oryza sativa subsp. japonica (Rice).